The following is a 351-amino-acid chain: Beta-1,4-xylosyltransferase IRX9 (351 aa).

Residues 1 to 16 (MGSLERSKKKAQVWKK) lie on the Cytoplasmic side of the membrane. A helical; Signal-anchor for type II membrane protein membrane pass occupies residues 17-36 (AVIHFSLCFVMGFFTGFAPA). At 37–351 (GKASFFSNFE…KFPTRTRLST (315 aa)) the chain is on the lumenal side. Residues N64 and N74 are each glycosylated (N-linked (GlcNAc...) asparagine). Residues 80–107 (SQSQAPAPAESREAEGETRSLSEKEDEN) form a disordered region. The segment covering 89-107 (ESREAEGETRSLSEKEDEN) has biased composition (basic and acidic residues). Residues N271 and N287 are each glycosylated (N-linked (GlcNAc...) asparagine).

The protein belongs to the glycosyltransferase 43 family. Expressed in developing interfascicular fibers, primary and secondary xylem in stems and developing secondary xylem in roots.

The protein localises to the golgi apparatus membrane. The catalysed reaction is [(1-&gt;4)-beta-D-xylan](n) + UDP-alpha-D-xylose = [(1-&gt;4)-beta-D-xylan](n+1) + UDP + H(+). Functionally, involved in the synthesis of the hemicellulose glucuronoxylan, a major component of secondary cell walls. Xylan xylosyltransferase that acts cooperatively with IRX14 to achieve the successive addition of xylosyl residues during xylan backbone elongation. The protein is Beta-1,4-xylosyltransferase IRX9 of Arabidopsis thaliana (Mouse-ear cress).